We begin with the raw amino-acid sequence, 420 residues long: L-rhamnose isomerase (420 aa).

The Mn(2+) site is built by His264, Asp296, and Asp298.

It belongs to the rhamnose isomerase family. Requires Mn(2+) as cofactor.

Its subcellular location is the cytoplasm. The catalysed reaction is L-rhamnopyranose = L-rhamnulose. It functions in the pathway carbohydrate degradation; L-rhamnose degradation; glycerone phosphate from L-rhamnose: step 1/3. Its function is as follows. Catalyzes the interconversion of L-rhamnose and L-rhamnulose. This Listeria monocytogenes serotype 4b (strain CLIP80459) protein is L-rhamnose isomerase.